We begin with the raw amino-acid sequence, 803 residues long: Palmitoyl thioesterase CPT1C (803 aa).

Residues 1–52 are Cytoplasmic-facing; the sequence is MAEAHQAVGFRPSLTSDGAEVELSAPVLQEIYLSGLRSWKRHLSRFWNDFLT. A helical transmembrane segment spans residues 53 to 75; sequence GVFPASPLSWLFLFSAIQLAWFL. Topologically, residues 76 to 103 are lumenal; the sequence is QLDPSLGLMEKIKELLPDWGGQHHGLRG. The helical transmembrane segment at 104–126 threads the bilayer; the sequence is VLAAALFASCLWGALIFTLHVAL. Residues 127–803 lie on the Cytoplasmic side of the membrane; sequence RLLLSYHGWL…SKASMTSTDF (677 aa). The active-site Proton acceptor is histidine 470. 552–564 serves as a coordination point for CoA; it reads GKSFIRRCHLSSD. (R)-carnitine is bound by residues tyrosine 586, serine 588, and threonine 599. The interval 761–803 is required for interaction with GRIA1; it reads LFQAGQHFKRRFRGSGKENSRHRCGFLSRQTGASKASMTSTDF. The disordered stretch occupies residues 772 to 803; that stretch reads FRGSGKENSRHRCGFLSRQTGASKASMTSTDF. Over residues 788-803 the composition is skewed to polar residues; that stretch reads SRQTGASKASMTSTDF.

This sequence belongs to the carnitine/choline acetyltransferase family. As to quaternary structure, peripherally associated with AMPAR complex. AMPAR complex consists of an inner core made of 4 pore-forming GluA/GRIA proteins (GRIA1, GRIA2, GRIA3 and GRIA4) and 4 major auxiliary subunits arranged in a twofold symmetry. One of the two pairs of distinct binding sites is occupied either by CNIH2, CNIH3 or CACNG2, CACNG3. The other harbors CACNG2, CACNG3, CACNG4, CACNG8 or GSG1L. This inner core of AMPAR complex is complemented by outer core constituents binding directly to the GluA/GRIA proteins at sites distinct from the interaction sites of the inner core constituents. Outer core constituents include at least PRRT1, PRRT2, CKAMP44/SHISA9, FRRS1L and NRN1. The proteins of the inner and outer core serve as a platform for other, more peripherally associated AMPAR constituents, including CPT1C. Alone or in combination, these auxiliary subunits control the gating and pharmacology of the AMPAR complex and profoundly impact their biogenesis and protein processing. Interacts with SACM1L; the interaction regulates SACM1L phosphatidylinositol-3-phosphatase activity and translocation to endoplasmic reticulum/trans Golgi network in a malonyl-CoA dependent manner. Interacts with ATL1. In terms of tissue distribution, expressed predominantly in brain and testis. Expressed in motor neurons.

It localises to the cell projection. Its subcellular location is the dendrite. The protein resides in the axon. The protein localises to the endoplasmic reticulum membrane. The enzyme catalyses S-hexadecanoyl-L-cysteinyl-[protein] + H2O = L-cysteinyl-[protein] + hexadecanoate + H(+). Functionally, palmitoyl thioesterase specifically expressed in the endoplasmic reticulum of neurons. Modulates the trafficking of the glutamate receptor, AMPAR, to plasma membrane through depalmitoylation of GRIA1. Also regulates AMPR trafficking through the regulation of SACM1L phosphatidylinositol-3-phosphatase activity by interaction in a malonyl-CoA dependent manner. Binds malonyl-CoA and couples malonyl-CoA to ceramide levels, necessary for proper spine maturation and contributing to systemic energy homeostasis and appetite control. Binds to palmitoyl-CoA, but does not have carnitine palmitoyltransferase 1 catalytic activity or at very low levels. The polypeptide is Palmitoyl thioesterase CPT1C (Homo sapiens (Human)).